The following is a 315-amino-acid chain: Shiga-like toxin 1 subunit A (315 aa).

Residues 1-22 (MKIIIFRVLTFFFVIFSVNVVA) form the signal peptide. The segment at 23-273 (KEFTLDFSTA…CHHHASRVAR (251 aa)) is A1. The active site involves glutamate 189. A disulfide bond links cysteine 264 and cysteine 283. The tract at residues 274 to 315 (MASDEFPSMCPADGRVRGITHNKILWDSSTLGAILMRRTISS) is A2.

It belongs to the ribosome-inactivating protein family. As to quaternary structure, shiga-like toxin contains a single subunit A and five copies of subunit B.

It localises to the secreted. The enzyme catalyses Endohydrolysis of the N-glycosidic bond at one specific adenosine on the 28S rRNA.. Functionally, the A subunit is responsible for inhibiting protein synthesis through the catalytic inactivation of 60S ribosomal subunits. After endocytosis, the A subunit is cleaved by furin in two fragments, A1 and A2: A1 is the catalytically active fragment, and A2 is essential for holotoxin assembly with the B subunits. In Escherichia coli (Bacteriophage H19B), this protein is Shiga-like toxin 1 subunit A (stxA).